A 351-amino-acid chain; its full sequence is N6-Methyl-AMP deaminase (351 aa).

Positions 23 and 25 each coordinate Zn(2+). N(6)-methyl-AMP contacts are provided by residues H25, N27, H73, 105–108, D147, and G180; that span reads STPR. H207 is a binding site for Zn(2+). Residues E210, D292, and D293 each contribute to the N(6)-methyl-AMP site. The active-site Proton donor is E210. Zn(2+) is bound at residue D292.

The protein belongs to the metallo-dependent hydrolases superfamily. Adenosine and AMP deaminases family. Monomer. Requires Zn(2+) as cofactor.

It carries out the reaction N(6)-methyl-AMP + H2O + H(+) = IMP + methylamine. Its function is as follows. Catalyzes the hydrolysis of the free cytosolic methylated adenosine nucleotide N(6)-methyl-AMP (N6-mAMP) to produce inositol monophosphate (IMP) and methylamine. Is required for the catabolism of cytosolic N6-mAMP, which is derived from the degradation of mRNA containing N6-methylated adenine (m6A). The chain is N6-Methyl-AMP deaminase from Bos taurus (Bovine).